Here is a 253-residue protein sequence, read N- to C-terminus: MQTHFIITSPLEQFEIVTIFPFSISGLNFSLTNSSLFLIIAVFLLLFWTSLSFYSNTLIPNNWQLVKESIYEITASMVQDNLGSKGEFYFPFIFTLHLLLLYCNLIGMIPYSFTVTSHIVFTFGLALSIFIGINLIGIQTHGFKFFALFLPRGVPLAIVPLLITIEFLSYIVKVFTLSIRLFANMTSGHTLLKIIAGFAWTMLSAGGLLAIFHLIPLALLLALTGLELAIAGLQAYVFTLLTCIYLNDVLDMH.

A run of 6 helical transmembrane segments spans residues 34–54, 89–109, 118–138, 156–178, 203–223, and 226–246; these read SSLFLIIAVFLLLFWTSLSFY, YFPFIFTLHLLLLYCNLIGMI, HIVFTFGLALSIFIGINLIGI, LAIVPLLITIEFLSYIVKVFTLS, LSAGGLLAIFHLIPLALLLAL, and LELAIAGLQAYVFTLLTCIYL.

This sequence belongs to the ATPase A chain family. In terms of assembly, F-type ATPases have 2 components, CF(1) - the catalytic core - and CF(0) - the membrane proton channel. CF(1) has five subunits: alpha(3), beta(3), gamma(1), delta(1), epsilon(1). CF(0) has three main subunits: a, b and c.

Its subcellular location is the mitochondrion inner membrane. In terms of biological role, mitochondrial membrane ATP synthase (F(1)F(0) ATP synthase or Complex V) produces ATP from ADP in the presence of a proton gradient across the membrane which is generated by electron transport complexes of the respiratory chain. F-type ATPases consist of two structural domains, F(1) - containing the extramembraneous catalytic core and F(0) - containing the membrane proton channel, linked together by a central stalk and a peripheral stalk. During catalysis, ATP synthesis in the catalytic domain of F(1) is coupled via a rotary mechanism of the central stalk subunits to proton translocation. Key component of the proton channel; it may play a direct role in the translocation of protons across the membrane. In Chondrus crispus (Carrageen Irish moss), this protein is ATP synthase subunit a (ATP6).